The sequence spans 147 residues: MGHFTEEDKATITSLWGKVNVEDAGGETLGRLLVVYPWTQRFFDSFGNLSSASAIMGNPKVKAHGKKVLTSLGDAIKNLDDLKGTFAQLSELHCDKLHVDPENFRLLGNVLVTVLAIHFGKEFTPEVQASWQKMVAGVASALSSRYH.

The region spanning 3 to 147 is the Globin domain; it reads HFTEEDKATI…VASALSSRYH (145 aa). His64 and His93 together coordinate heme b.

This sequence belongs to the globin family. Heterotetramer of two alpha chains and two gamma chains in fetal hemoglobin (Hb F). As to expression, red blood cells.

Gamma chains make up the fetal hemoglobin F, in combination with alpha chains. The chain is Hemoglobin subunit gamma (HBG) from Macaca fuscata fuscata (Japanese macaque).